A 343-amino-acid chain; its full sequence is Protein RecA (343 aa).

This sequence belongs to the RecA family.

It localises to the cytoplasm. In terms of biological role, can catalyze the hydrolysis of ATP in the presence of single-stranded DNA, the ATP-dependent uptake of single-stranded DNA by duplex DNA, and the ATP-dependent hybridization of homologous single-stranded DNAs. It interacts with LexA causing its activation and leading to its autocatalytic cleavage. The sequence is that of Protein RecA from Coxiella burnetii (strain RSA 493 / Nine Mile phase I).